The following is a 184-amino-acid chain: ADP-ribosylation factor-like protein 2 (184 aa).

Residue Gly2 is the site of N-myristoyl glycine attachment. GTP contacts are provided by residues 23–30 (GLDNAGKT), 66–70 (DIGGQ), and 125–128 (NKQD).

The protein belongs to the small GTPase superfamily. Arf family.

May be involved in trafficking events within the endosomal system. The protein is ADP-ribosylation factor-like protein 2 (arl2) of Dictyostelium discoideum (Social amoeba).